A 705-amino-acid chain; its full sequence is Polyphosphate kinase (705 aa).

ATP is bound at residue asparagine 58. Residues arginine 389 and arginine 419 each coordinate Mg(2+). Histidine 449 functions as the Phosphohistidine intermediate in the catalytic mechanism. ATP is bound by residues tyrosine 482, arginine 578, and histidine 606.

It belongs to the polyphosphate kinase 1 (PPK1) family. Mg(2+) serves as cofactor. An intermediate of this reaction is the autophosphorylated ppk in which a phosphate is covalently linked to a histidine residue through a N-P bond.

It carries out the reaction [phosphate](n) + ATP = [phosphate](n+1) + ADP. Functionally, catalyzes the reversible transfer of the terminal phosphate of ATP to form a long-chain polyphosphate (polyP). In Halalkalibacterium halodurans (strain ATCC BAA-125 / DSM 18197 / FERM 7344 / JCM 9153 / C-125) (Bacillus halodurans), this protein is Polyphosphate kinase.